A 552-amino-acid polypeptide reads, in one-letter code: Macrophage colony-stimulating factor 1 (552 aa).

The signal sequence occupies residues 1–32; that stretch reads MTARGAAGRCPSSTWLGSRLLLVCLLMSRSIA. Topologically, residues 33–492 are extracellular; the sequence is KEVSEHCSHM…EGSSDPQIPE (460 aa). 3 disulfide bridges follow: Cys-39/Cys-122, Cys-80/Cys-171, and Cys-134/Cys-178. 3 N-linked (GlcNAc...) asparagine glycosylation sites follow: Asn-107, Asn-154, and Asn-172. Positions 197-207 are enriched in low complexity; sequence TPSSDPASASP. A disordered region spans residues 197 to 293; sequence TPSSDPASAS…GGPVPGVEDI (97 aa). A compositionally biased stretch (polar residues) spans 254–267; sequence PRSTCQTLESTEQP. Positions 268–278 are enriched in basic and acidic residues; it reads NHGDRLTEDSQ. O-linked (Xyl...) (chondroitin sulfate) serine glycosylation is present at Ser-308. Disordered stretches follow at residues 321–412 and 439–465; these read KFSP…RVSN and GKRS…ARPV. Composition is skewed to basic and acidic residues over residues 350–364, 382–396, and 439–450; these read STED…DRPL, EKTD…DHQE, and GKRSTRDRRSPA. Residue Thr-360 is glycosylated (O-linked (GalNAc...) threonine). Residues 493-515 traverse the membrane as a helical segment; that stretch reads SVFHLLVPGIILVLLTVGGLLFY. At 516 to 552 the chain is on the cytoplasmic side; sequence KWKWRSHRDPQTLDSSVGRPEDSSLTQDEDRQVELPV. The tract at residues 525–552 is disordered; sequence PQTLDSSVGRPEDSSLTQDEDRQVELPV. The span at 543–552 shows a compositional bias: basic and acidic residues; sequence DEDRQVELPV.

As to quaternary structure, homodimer or heterodimer; disulfide-linked. Likely to exist in multiple forms: homodimer consisting of 2 identical 150-200 kDa proteoglycan subunits, heterodimer consisting of a 150-200 kDa proteoglycan subunit and a truncated 43 kDa subunit, and homodimer consisting of 2 identical 43 kDa subunits. Interacts with CSF1R. In terms of processing, N-glycosylated. O-glycosylated; contains chondroitin sulfate.

It localises to the cell membrane. The protein resides in the secreted. Its subcellular location is the extracellular space. Its function is as follows. Cytokine that plays an essential role in the regulation of survival, proliferation and differentiation of hematopoietic precursor cells, especially mononuclear phagocytes, such as macrophages and monocytes. Promotes the release of pro-inflammatory chemokines, and thereby plays an important role in innate immunity and in inflammatory processes. Plays an important role in the regulation of osteoclast proliferation and differentiation, the regulation of bone resorption, and is required for normal bone development. Required for normal male and female fertility. Promotes reorganization of the actin cytoskeleton, regulates formation of membrane ruffles, cell adhesion and cell migration. Plays a role in lipoprotein clearance. The chain is Macrophage colony-stimulating factor 1 (Csf1) from Mus musculus (Mouse).